A 199-amino-acid polypeptide reads, in one-letter code: Probable cobalt-precorrin-6B C(15)-methyltransferase (decarboxylating) (199 aa).

Residues Thr-24, 48-52 (GCGTG), Asp-72, and Ala-101 each bind S-adenosyl-L-methionine.

It belongs to the methyltransferase superfamily. Archaeal-type CbiT family.

It catalyses the reaction Co-precorrin-6B + S-adenosyl-L-methionine = Co-precorrin-7 + S-adenosyl-L-homocysteine + CO2. It participates in cofactor biosynthesis; adenosylcobalamin biosynthesis; cob(II)yrinate a,c-diamide from sirohydrochlorin (anaerobic route): step 8/10. In terms of biological role, catalyzes the methylation of C-15 in cobalt-precorrin-6B followed by the decarboxylation of C-12 to form cobalt-precorrin-7. The polypeptide is Probable cobalt-precorrin-6B C(15)-methyltransferase (decarboxylating) (Saccharolobus islandicus (strain L.S.2.15 / Lassen #1) (Sulfolobus islandicus)).